A 401-amino-acid chain; its full sequence is L-rhamnonate dehydratase (401 aa).

2 residues coordinate substrate: His-29 and Arg-55. 3 residues coordinate Mg(2+): Asp-222, Glu-248, and Glu-276. The Proton acceptor role is filled by His-325. Glu-345 lines the substrate pocket.

Belongs to the mandelate racemase/muconate lactonizing enzyme family. RhamD subfamily. As to quaternary structure, homooctamer; tetramer of dimers. Requires Mg(2+) as cofactor.

It catalyses the reaction L-rhamnonate = 2-dehydro-3-deoxy-L-rhamnonate + H2O. Functionally, catalyzes the dehydration of L-rhamnonate to 2-keto-3-deoxy-L-rhamnonate (KDR). This is L-rhamnonate dehydratase from Klebsiella pneumoniae subsp. pneumoniae (strain ATCC 700721 / MGH 78578).